Reading from the N-terminus, the 504-residue chain is Melianol synthase CYP71BQ5 (504 aa).

A helical membrane pass occupies residues 2–22 (EFRLPSLPVFLSFLLFFLMLV). C442 provides a ligand contact to heme.

Belongs to the cytochrome P450 family. It depends on heme as a cofactor. In terms of tissue distribution, mainly expressed in fruits and leaves.

The protein resides in the membrane. The enzyme catalyses dihydroniloticin + 2 reduced [NADPH--hemoprotein reductase] + 2 O2 = melianol + 2 oxidized [NADPH--hemoprotein reductase] + 3 H2O + 2 H(+). It functions in the pathway secondary metabolite biosynthesis; terpenoid biosynthesis. Monooxygenase involved in the biosynthesis of limonoids triterpene natural products such as azadirachtin, an antifeedant widely used as bioinsecticide, and possessing many medicinal applications including anti-tumoral, anti-malarial, anti-rheumatic, antibacterial, anti-inflammatory, anti-pyretic and diuretic effects. Catalyzes the conversion of dihydroniloticin to the protolimonoid melianol. The protein is Melianol synthase CYP71BQ5 of Azadirachta indica (Neem tree).